The primary structure comprises 274 residues: Orotidine 5'-phosphate decarboxylase (274 aa).

Positions 1–15 (MSAGRRSSGGRSAAA) are enriched in low complexity. The tract at residues 1-21 (MSAGRRSSGGRSAAAPRFTPP) is disordered. Residues Asp32, Lys54, 99-108 (DLKLHDIPAT), Thr154, Arg215, Gln224, Gly244, and Arg245 contribute to the substrate site. The active-site Proton donor is Lys101.

This sequence belongs to the OMP decarboxylase family. Type 1 subfamily. Homodimer.

It carries out the reaction orotidine 5'-phosphate + H(+) = UMP + CO2. It functions in the pathway pyrimidine metabolism; UMP biosynthesis via de novo pathway; UMP from orotate: step 2/2. In terms of biological role, catalyzes the decarboxylation of orotidine 5'-monophosphate (OMP) to uridine 5'-monophosphate (UMP). This Frankia casuarinae (strain DSM 45818 / CECT 9043 / HFP020203 / CcI3) protein is Orotidine 5'-phosphate decarboxylase.